A 352-amino-acid polypeptide reads, in one-letter code: tRNA (guanine-N(1)-)-methyltransferase (352 aa).

Residues Gly-109 and 129 to 134 each bind S-adenosyl-L-methionine; that span reads IGDYVL.

This sequence belongs to the RNA methyltransferase TrmD family. Homodimer.

The protein resides in the cytoplasm. It catalyses the reaction guanosine(37) in tRNA + S-adenosyl-L-methionine = N(1)-methylguanosine(37) in tRNA + S-adenosyl-L-homocysteine + H(+). Functionally, specifically methylates guanosine-37 in various tRNAs. This chain is tRNA (guanine-N(1)-)-methyltransferase, found in Chlamydia trachomatis serovar L2 (strain ATCC VR-902B / DSM 19102 / 434/Bu).